We begin with the raw amino-acid sequence, 436 residues long: Adenine nucleotide transporter BT1, chloroplastic/amyloplastic/mitochondrial (436 aa).

Positions 83–135 (ASLAPPFPGSRPPGRRGRGSEEEEAEGRRHEEAAAAGRSEPEEGQGQDRQPAP) are disordered. Solcar repeat units follow at residues 132–216 (QPAP…AKKF), 227–311 (IPIP…LKRL), and 324–412 (VGPV…CKKI). 6 helical membrane-spanning segments follow: residues 137 to 158 (RLVS…LETI), 193 to 213 (AVNV…YDTA), 229 to 247 (IPTP…TLCT), 290 to 310 (SLIG…TLKR), 327 to 347 (VATL…TFPL), and 384 to 405 (LYRG…AFMC). Positions 417-428 (EDEEEEDEAGGG) are enriched in acidic residues. The tract at residues 417–436 (EDEEEEDEAGGGEDDKKKVE) is disordered.

This sequence belongs to the mitochondrial carrier (TC 2.A.29) family. In terms of tissue distribution, highly expressed in silks and endosperm of developing kernels. Expressed at intermediate levels in tassels and lower levels in stems and leaves.

It is found in the plastid. Its subcellular location is the chloroplast inner membrane. The protein localises to the amyloplast inner membrane. The protein resides in the mitochondrion inner membrane. Inhibited by mersalyl. Probable adenylate translocator that mediates transport of ADP-glucose into endosperm storage plastids during starch synthesis. Transports cytosolic ADP-glucose to amyloplast stroma by counter-exchange with ADP. The polypeptide is Adenine nucleotide transporter BT1, chloroplastic/amyloplastic/mitochondrial (BT1) (Zea mays (Maize)).